The sequence spans 969 residues: GATOR2 complex protein Wdr59 (969 aa).

The tract at residues 1-24 (MPPTETLRPGERGTAGGPGAGAPE) is disordered. 5 WD repeats span residues 127-167 (GHTR…KPAL), 172-211 (VCMS…CPTH), 215-255 (AHLN…RAEK), 258-303 (TTMS…DPIC), and 307-351 (GHTD…LKLC). At Thr-373 the chain carries Phosphothreonine. The 104-residue stretch at 435-538 (HEFSLLNTNM…RALVAAMKKK (104 aa)) folds into the RWD domain. The segment at 891-911 (ECRKCAKPKRTPKCEPCKRPV) adopts a C4-type zinc-finger fold. Zn(2+)-binding residues include Cys-892, Cys-895, Cys-904, Cys-907, Cys-917, Cys-928, His-933, His-936, His-939, Cys-950, Cys-953, Cys-955, and Cys-957. An RING-type; atypical zinc finger spans residues 912–960 (LFCVLCRLPVKGAANACLACGHGGHIDHMMQWFEKHNVCATCGCKCLER).

This sequence belongs to the WD repeat WDR59 family. In terms of assembly, component of the GATOR complex consisting of mio, Nup44A/Seh1, Im11, Nplr3, Nplr2, Wdr24, Wdr59 and Sec13. Within the GATOR complex, probable component of the GATOR2 subcomplex which is likely composed of mio, Nup44A/Seh1, Wdr24, Wdr59 and Sec13. The GATOR2 complex associates with unmet in the absence of S-adenosyl-L-methionine; the mio-Wdr24-Nup44A subcomplex is essential and sufficient for this interaction while Wdr59 and Sec13 are dispensable. This association acts as a nutrient sensor to inhibit mTORC1 signaling in the absence of methionine.

It is found in the lysosome membrane. Its function is as follows. A component of the GATOR complex, which functions as a regulator of the amino acid-sensing branch of the mTORC1 signaling pathway. The two GATOR subcomplexes, GATOR1 and GATOR2, regulate the mTORC1 pathway in order to mediate metabolic homeostasis, female gametogenesis and the response to amino acid limitation and complete starvation. GATOR2 activates the mTORC1 signaling pathway through the inhibition of the GATOR1 subcomplex, controlling the switch to cell proliferation and growth under nutrient replete conditions and during female oocyte development. Acts as an atypical component of the GATOR2 subcomplex, which can either promote or inhibit mTORC1 signaling, depending on tissues: inhibits mTORC1 activity by preventing the activity of GATOR2 in the ovary and the eye imaginal disk brain, while it promotes mTORC1 activity in the fat body. This Drosophila melanogaster (Fruit fly) protein is GATOR2 complex protein Wdr59.